A 233-amino-acid chain; its full sequence is Lipoprotein-releasing system ATP-binding protein LolD (233 aa).

An ABC transporter domain is found at 6-233; that stretch reads LQCDNLCKRY…TAELSLMGAE (228 aa). 42 to 49 lines the ATP pocket; that stretch reads GSSGSGKS.

This sequence belongs to the ABC transporter superfamily. Lipoprotein translocase (TC 3.A.1.125) family. In terms of assembly, the complex is composed of two ATP-binding proteins (LolD) and two transmembrane proteins (LolC and LolE).

The protein localises to the cell inner membrane. In terms of biological role, part of the ABC transporter complex LolCDE involved in the translocation of mature outer membrane-directed lipoproteins, from the inner membrane to the periplasmic chaperone, LolA. Responsible for the formation of the LolA-lipoprotein complex in an ATP-dependent manner. Such a release is dependent of the sorting-signal (absence of an Asp at position 2 of the mature lipoprotein) and of LolA. In Escherichia coli (strain K12), this protein is Lipoprotein-releasing system ATP-binding protein LolD.